The chain runs to 244 residues: MSLPSCVPGYRRILLKLSGEVLMGEQQFGIDTDYVARVAQEVKDARDSGLEICLVIGGGNIFRGMAGAAKGMDRAQADYMGMLATVMNALAMQSALEQLGVPTRVQSAIEMDKVCEPVIRRRAERHLEKGRIVIFAAGVGAPYFTTDSGAALRAAEMKCDALLKGTSVDGVYNADPKKDPAAKRYETVDYDTVLADNLKVMDASAVALCRDNNIPIVVFSIRERGNLARVLAGEGTQTTVKKEA.

16-19 is a binding site for ATP; that stretch reads KLSG. Position 58 (Gly-58) interacts with UMP. Positions 59 and 63 each coordinate ATP. UMP-binding positions include Asp-78 and 139–146; that span reads VGAPYFTT. The ATP site is built by Thr-166, Tyr-172, and Asp-175.

Belongs to the UMP kinase family. As to quaternary structure, homohexamer.

The protein resides in the cytoplasm. The enzyme catalyses UMP + ATP = UDP + ADP. It functions in the pathway pyrimidine metabolism; CTP biosynthesis via de novo pathway; UDP from UMP (UMPK route): step 1/1. With respect to regulation, inhibited by UTP. Catalyzes the reversible phosphorylation of UMP to UDP. The protein is Uridylate kinase of Novosphingobium aromaticivorans (strain ATCC 700278 / DSM 12444 / CCUG 56034 / CIP 105152 / NBRC 16084 / F199).